A 576-amino-acid polypeptide reads, in one-letter code: NADH-quinone oxidoreductase subunit C/D (576 aa).

Residues 1 to 176 are NADH dehydrogenase I subunit C; the sequence is MAWISLEKAK…NLEGLFNYDR (176 aa). An NADH dehydrogenase I subunit D region spans residues 200–576; it reads SQIVLNWGPL…IDPVVGETDR (377 aa).

It in the N-terminal section; belongs to the complex I 30 kDa subunit family. In the C-terminal section; belongs to the complex I 49 kDa subunit family. As to quaternary structure, NDH-1 is composed of 13 different subunits. Subunits NuoB, CD, E, F, and G constitute the peripheral sector of the complex.

The protein localises to the cell inner membrane. It carries out the reaction a quinone + NADH + 5 H(+)(in) = a quinol + NAD(+) + 4 H(+)(out). NDH-1 shuttles electrons from NADH, via FMN and iron-sulfur (Fe-S) centers, to quinones in the respiratory chain. The immediate electron acceptor for the enzyme in this species is believed to be ubiquinone. Couples the redox reaction to proton translocation (for every two electrons transferred, four hydrogen ions are translocated across the cytoplasmic membrane), and thus conserves the redox energy in a proton gradient. The protein is NADH-quinone oxidoreductase subunit C/D of Sulfurihydrogenibium sp. (strain YO3AOP1).